The chain runs to 294 residues: Phosphatidylinositol transfer protein SFH5 (294 aa).

Residues 100-266 (HNTELQNVGI…GYGGKDKKNN (167 aa)) enclose the CRAL-TRIO domain. The heme site is built by Tyr-128, Arg-148, His-173, Tyr-175, and Lys-209.

The protein belongs to the SFH5 family. Requires heme b as cofactor.

Its subcellular location is the cytoplasm. The protein localises to the endoplasmic reticulum membrane. The protein resides in the microsome membrane. The enzyme catalyses a 1,2-diacyl-sn-glycero-3-phospho-(1D-myo-inositol)(in) = a 1,2-diacyl-sn-glycero-3-phospho-(1D-myo-inositol)(out). Non-classical phosphatidylinositol (PtdIns) transfer protein (PITP), which exhibits PtdIns-binding/transfer activity in the absence of detectable PtdCho-binding/transfer activity. Regulates PtdIns(4,5)P2 homeostasis at the plasma membrane. Heme-binding protein that may play a role in organic oxidant-induced stress responses. The polypeptide is Phosphatidylinositol transfer protein SFH5 (SFH5) (Saccharomyces cerevisiae (strain YJM789) (Baker's yeast)).